The chain runs to 316 residues: Olfactory receptor 4N4 (316 aa).

Topologically, residues 1-25 are extracellular; sequence MKIANNTVVTEFILLGLTQSQDIQL. Residue N5 is glycosylated (N-linked (GlcNAc...) asparagine). A helical transmembrane segment spans residues 26–49; it reads LVFVLILIFYLIILPGNFLIIFTI. At 50 to 57 the chain is on the cytoplasmic side; it reads RSDPGLTA. A helical transmembrane segment spans residues 58–79; the sequence is PLYLFLGNLAFLDASYSFIVAP. Over 80–100 the chain is Extracellular; it reads RMLVDFLSEKKVISYRGCITQ. A disulfide bridge connects residues C97 and C189. The chain crosses the membrane as a helical span at residues 101–120; that stretch reads LFFLHFLGGGEGLLLVVMAF. Topologically, residues 121-139 are cytoplasmic; the sequence is DRYIAICRPLHCSTVMNPR. The helical transmembrane segment at 140 to 158 threads the bilayer; the sequence is ACYAMMLALWLGGFVHSII. At 159–195 the chain is on the extracellular side; that stretch reads QVVLILRLPFCGPNQLDNFFCDVRQVIKLACTDMFVV. A helical transmembrane segment spans residues 196–219; the sequence is ELLMVFNSGLMTLLCFLGLLASYA. Topologically, residues 220-235 are cytoplasmic; that stretch reads VILCHVRRAASEGKNK. Residues 236-258 form a helical membrane-spanning segment; it reads AMSTCTTRVIIILLMFGPAIFIY. Residues 259–269 lie on the Extracellular side of the membrane; that stretch reads MCPFRALPADK. The chain crosses the membrane as a helical span at residues 270–289; sequence MVSLFHTVIFPLMNPMIYTL. The Cytoplasmic segment spans residues 290-316; that stretch reads RNQEVKTSMKRLLSRHVVCQVDFIIRN.

This sequence belongs to the G-protein coupled receptor 1 family.

It localises to the cell membrane. Functionally, odorant receptor. The protein is Olfactory receptor 4N4 (OR4N4) of Homo sapiens (Human).